A 426-amino-acid chain; its full sequence is Glutamyl-tRNA reductase (426 aa).

Substrate-binding positions include 49–52 (TCNR), S107, 112–114 (EPQ), and Q118. The active-site Nucleophile is the C50. 187 to 192 (GAGETI) serves as a coordination point for NADP(+).

This sequence belongs to the glutamyl-tRNA reductase family. Homodimer.

The enzyme catalyses (S)-4-amino-5-oxopentanoate + tRNA(Glu) + NADP(+) = L-glutamyl-tRNA(Glu) + NADPH + H(+). It participates in porphyrin-containing compound metabolism; protoporphyrin-IX biosynthesis; 5-aminolevulinate from L-glutamyl-tRNA(Glu): step 1/2. Its function is as follows. Catalyzes the NADPH-dependent reduction of glutamyl-tRNA(Glu) to glutamate 1-semialdehyde (GSA). The polypeptide is Glutamyl-tRNA reductase (Ectopseudomonas mendocina (strain ymp) (Pseudomonas mendocina)).